We begin with the raw amino-acid sequence, 439 residues long: MKGLYIKTYGCQMNVYDSVLMENVIKPLGFNVVSDAGKADLVILNTCHIREKAAEKLYSELGKIHSLRKEMTIVVAGCVAQAEGEEVFRRAPFVDIVVGPQSIATLPELIVKASRSKGHVINTDFPEVAKFDKLPDECYGNSQGSSAFLAIQEGCDKFCTFCVVPYTRGAEYSRPVNEIFREALKLVANGANEINLLGQNVNAYHGECEGEVWDLGKLISHIAKIEKLERIRYTTSHPRDMHESLYLAHAEEPKLMPFVHLPVQSGSNKILHAMNRKHTAEEYLEIIDRFRKLKPEIEFSSDFIVGFPGETEKDFEETMKLVEKVRYAQAYSFKYSPRPGTPGAERKDQVPEEVKTERLLRLQKLISKQQLEFNQSMVGKTIPVLFSDKKGKHQNQIIGKSPYMQSVCIDDSEDKYRDKIVNVKVLEARQSSLLGCAFH.

The 114-residue stretch at K2–R115 folds into the MTTase N-terminal domain. Residues C11, C47, C78, C155, C159, and C162 each contribute to the [4Fe-4S] cluster site. The region spanning N141–E372 is the Radical SAM core domain. The TRAM domain occupies Q375 to H439.

This sequence belongs to the methylthiotransferase family. MiaB subfamily. Monomer. It depends on [4Fe-4S] cluster as a cofactor.

The protein localises to the cytoplasm. It catalyses the reaction N(6)-dimethylallyladenosine(37) in tRNA + (sulfur carrier)-SH + AH2 + 2 S-adenosyl-L-methionine = 2-methylsulfanyl-N(6)-dimethylallyladenosine(37) in tRNA + (sulfur carrier)-H + 5'-deoxyadenosine + L-methionine + A + S-adenosyl-L-homocysteine + 2 H(+). In terms of biological role, catalyzes the methylthiolation of N6-(dimethylallyl)adenosine (i(6)A), leading to the formation of 2-methylthio-N6-(dimethylallyl)adenosine (ms(2)i(6)A) at position 37 in tRNAs that read codons beginning with uridine. This chain is tRNA-2-methylthio-N(6)-dimethylallyladenosine synthase, found in Wolbachia pipientis wMel.